Reading from the N-terminus, the 157-residue chain is S-ribosylhomocysteine lyase (157 aa).

3 residues coordinate Fe cation: H54, H58, and C124.

Belongs to the LuxS family. Homodimer. Requires Fe cation as cofactor.

It carries out the reaction S-(5-deoxy-D-ribos-5-yl)-L-homocysteine = (S)-4,5-dihydroxypentane-2,3-dione + L-homocysteine. Functionally, involved in the synthesis of autoinducer 2 (AI-2) which is secreted by bacteria and is used to communicate both the cell density and the metabolic potential of the environment. The regulation of gene expression in response to changes in cell density is called quorum sensing. Catalyzes the transformation of S-ribosylhomocysteine (RHC) to homocysteine (HC) and 4,5-dihydroxy-2,3-pentadione (DPD). This Pediococcus pentosaceus (strain ATCC 25745 / CCUG 21536 / LMG 10740 / 183-1w) protein is S-ribosylhomocysteine lyase.